Here is a 598-residue protein sequence, read N- to C-terminus: uncharacterized protein (598 aa).

The segment covering 1–19 has biased composition (low complexity); that stretch reads MSVPLRFSTPSSSPSASDN. Disordered stretches follow at residues 1–54, 139–176, and 194–279; these read MSVP…MRPK, QKNQ…PNWK, and EAQL…ITMP. Residues 1–313 lie on the Cytoplasmic side of the membrane; sequence MSVPLRFSTP…CKIRHFFREG (313 aa). A compositionally biased stretch (polar residues) spans 30–48; that stretch reads ELDTFNTTDVPRRVNTTKA. The span at 147-165 shows a compositional bias: low complexity; the sequence is RANSRVNSRANSRANSSVS. 2 stretches are compositionally biased toward polar residues: residues 218-242 and 255-276; these read FSLQ…SSAI and PRNN…SQDI. Residues 314-334 form a helical membrane-spanning segment; sequence FAEFLGTLVLVVFGVGSNLQA. Over 335–346 the chain is Extracellular; that stretch reads TVTNGAGGSFES. Residues 347 to 367 form a helical membrane-spanning segment; it reads LSFAWGFGCMLGVYIAGGISG. Residues 368-388 are Cytoplasmic-facing; the sequence is GHVNPAVTISLAIFRKFPWYK. The NPA 1 motif lies at 371-373; it reads NPA. The helical transmembrane segment at 389 to 409 threads the bilayer; sequence VPIYIFFQIWGAFFGGALAYG. The Extracellular segment spans residues 410–444; that stretch reads YHWSSITEFEGGKDIRTPATGGCLYTNPKPYVTWR. A helical membrane pass occupies residues 445-465; the sequence is NAFFDEFIGTAVLVGCLFAIL. Residues 466-473 are Cytoplasmic-facing; it reads DDTNSPPT. Residues 474–494 form a helical membrane-spanning segment; that stretch reads QGMTAFIVGLLIAAIGMALGY. Over 495-532 the chain is Extracellular; that stretch reads QTSFTLNPARDLGPRMFAWWIGYGPHSFHLYHWWWTWG. The NPA 2 motif lies at 501-503; sequence NPA. The helical transmembrane segment at 533-553 threads the bilayer; it reads AWGGTIGGGIAGGLIYDLVIF. Over 554 to 598 the chain is Cytoplasmic; the sequence is TGPESPLNYPDNGFIDKKVHQITAKFEKEEEVENLEKTDSPIENN.

Belongs to the MIP/aquaporin (TC 1.A.8) family.

The protein localises to the membrane. This is an uncharacterized protein from Schizosaccharomyces pombe (strain 972 / ATCC 24843) (Fission yeast).